The primary structure comprises 73 residues: Toxin Td12 (73 aa).

The first 7 residues, 1–7 (IGMVIEC), serve as a signal peptide directing secretion. The LCN-type CS-alpha/beta domain occupies 8-70 (KDGYLMEPNG…TWDRATNTCG (63 aa)). 4 disulfides stabilise this stretch: cysteine 18/cysteine 69, cysteine 22/cysteine 44, cysteine 30/cysteine 50, and cysteine 34/cysteine 52. Arginine 71 is modified (arginine amide).

It belongs to the long (4 C-C) scorpion toxin superfamily. Sodium channel inhibitor family. Beta subfamily. Expressed by the venom gland.

It localises to the secreted. Its function is as follows. Beta toxins bind voltage-independently at site-4 of sodium channels (Nav) and shift the voltage of activation toward more negative potentials thereby affecting sodium channel activation and promoting spontaneous and repetitive firing. This Tityus discrepans (Venezuelan scorpion) protein is Toxin Td12.